Here is a 220-residue protein sequence, read N- to C-terminus: MAARAPELARSLLAALLAPALVALLVSPASGRGGRDHGDWDVDRRLPPLPPREDGPRVARFVTHVSDWGSLATISTIKEVRGWPFADIISISDGPPGEGTGEPYMYLSPLQQAVSDLQENPEATLTMSLAQTVYCRNHGFDPQSPLCVHIMMSGTVTKVNKTEEDYARDSLFVRHPEMKHWPSSHNWFFAKLKISRIWVLDYFGGPKVVTPEEYFNVTLQ.

The N-terminal stretch at 1 to 31 (MAARAPELARSLLAALLAPALVALLVSPASG) is a signal peptide. The tract at residues 30 to 53 (SGRGGRDHGDWDVDRRLPPLPPRE) is disordered. Over residues 33-53 (GGRDHGDWDVDRRLPPLPPRE) the composition is skewed to basic and acidic residues. N160 and N216 each carry an N-linked (GlcNAc...) asparagine glycan.

It belongs to the CREG family. Homodimer. Interacts with IGF2R; the interaction is dependent on glycosylation. N-glycosylated. In terms of tissue distribution, widely expressed.

The protein localises to the secreted. In terms of biological role, may contribute to the transcriptional control of cell growth and differentiation. Antagonizes transcriptional activation and cellular transformation by the adenovirus E1A protein. The transcriptional control activity of cell growth requires interaction with IGF2R. The protein is Protein CREG1 (Creg1) of Mus musculus (Mouse).